The following is an 84-amino-acid chain: Putative antitoxin VapB7 (84 aa).

Antitoxin component of a possible type II toxin-antitoxin (TA) system. The cognate toxin is VapC7. The sequence is that of Putative antitoxin VapB7 (vapB7) from Mycobacterium tuberculosis (strain ATCC 25618 / H37Rv).